The following is a 224-amino-acid chain: Phosphoribosylformylglycinamidine synthase subunit PurQ (224 aa).

The 222-residue stretch at Phe-3–Ala-224 folds into the Glutamine amidotransferase type-1 domain. Residue Cys-86 is the Nucleophile of the active site. Catalysis depends on residues His-195 and Glu-197.

As to quaternary structure, part of the FGAM synthase complex composed of 1 PurL, 1 PurQ and 2 PurS subunits.

It is found in the cytoplasm. It catalyses the reaction N(2)-formyl-N(1)-(5-phospho-beta-D-ribosyl)glycinamide + L-glutamine + ATP + H2O = 2-formamido-N(1)-(5-O-phospho-beta-D-ribosyl)acetamidine + L-glutamate + ADP + phosphate + H(+). It carries out the reaction L-glutamine + H2O = L-glutamate + NH4(+). It participates in purine metabolism; IMP biosynthesis via de novo pathway; 5-amino-1-(5-phospho-D-ribosyl)imidazole from N(2)-formyl-N(1)-(5-phospho-D-ribosyl)glycinamide: step 1/2. Its function is as follows. Part of the phosphoribosylformylglycinamidine synthase complex involved in the purines biosynthetic pathway. Catalyzes the ATP-dependent conversion of formylglycinamide ribonucleotide (FGAR) and glutamine to yield formylglycinamidine ribonucleotide (FGAM) and glutamate. The FGAM synthase complex is composed of three subunits. PurQ produces an ammonia molecule by converting glutamine to glutamate. PurL transfers the ammonia molecule to FGAR to form FGAM in an ATP-dependent manner. PurS interacts with PurQ and PurL and is thought to assist in the transfer of the ammonia molecule from PurQ to PurL. The polypeptide is Phosphoribosylformylglycinamidine synthase subunit PurQ (Nostoc sp. (strain PCC 7120 / SAG 25.82 / UTEX 2576)).